We begin with the raw amino-acid sequence, 196 residues long: Imidazoleglycerol-phosphate dehydratase (196 aa).

The protein belongs to the imidazoleglycerol-phosphate dehydratase family.

Its subcellular location is the cytoplasm. It catalyses the reaction D-erythro-1-(imidazol-4-yl)glycerol 3-phosphate = 3-(imidazol-4-yl)-2-oxopropyl phosphate + H2O. It functions in the pathway amino-acid biosynthesis; L-histidine biosynthesis; L-histidine from 5-phospho-alpha-D-ribose 1-diphosphate: step 6/9. The polypeptide is Imidazoleglycerol-phosphate dehydratase (Ralstonia nicotianae (strain ATCC BAA-1114 / GMI1000) (Ralstonia solanacearum)).